The sequence spans 67 residues: Retron Se72 cold shock-like protein (67 aa).

The region spanning Met1–Lys66 is the CSD domain.

Functionally, probable cold shock-like component of antiviral defense system retron Se72, composed of a non-coding RNA (ncRNA), a reverse transcriptase (RT) and this protein. Expression of retron Se72 confers protection against bacteriophage lambda. At multiplicity of infection (MOI) of 0.02 cultures slow growth when infected with lambda but do not collapse, at MOI 2 cultures enter growth stasis. The protein is Retron Se72 cold shock-like protein of Salmonella heidelberg (strain 579083-10).